The following is a 151-amino-acid chain: Small ribosomal subunit protein uS15z (151 aa).

It belongs to the universal ribosomal protein uS15 family.

This chain is Small ribosomal subunit protein uS15z, found in Oryza sativa subsp. japonica (Rice).